The chain runs to 154 residues: Lipoprotein signal peptidase (154 aa).

Transmembrane regions (helical) follow at residues 57–77 and 86–103; these read LVLSAVTLLVLSAIIVYMIKY and ISLSLVISGALGNLYDRV. Catalysis depends on residues Asp110 and Asp129. The helical transmembrane segment at 124 to 144 threads the bilayer; that stretch reads VFNVADICVVVGTIMIAIFIV.

The protein belongs to the peptidase A8 family.

It localises to the cell membrane. The enzyme catalyses Release of signal peptides from bacterial membrane prolipoproteins. Hydrolyzes -Xaa-Yaa-Zaa-|-(S,diacylglyceryl)Cys-, in which Xaa is hydrophobic (preferably Leu), and Yaa (Ala or Ser) and Zaa (Gly or Ala) have small, neutral side chains.. It participates in protein modification; lipoprotein biosynthesis (signal peptide cleavage). In terms of biological role, this protein specifically catalyzes the removal of signal peptides from prolipoproteins. The sequence is that of Lipoprotein signal peptidase from Clostridium acetobutylicum (strain ATCC 824 / DSM 792 / JCM 1419 / IAM 19013 / LMG 5710 / NBRC 13948 / NRRL B-527 / VKM B-1787 / 2291 / W).